We begin with the raw amino-acid sequence, 544 residues long: MAAKEVKFGRSAREKMLKGVDILADAVKVTLGPKGRNVVIDKSFGAPRITKDGVSVAKEIELEDKFENMGAQLVREVASKTNDIAGDGTTTATVLAQAIVREGAKAVAAGMNPMDLKRGIDLAVAEVVKDLQAKAKKINTSEEVAQVGTISANGERQIGLDIAEAMQRVGNEGVITVEEAKTAETELEVVEGMQFDRGYLSPYFVTNPEKMVADLEDAYILLHEKKLSNLQAMLPVLEAVVQTGKPLVIIAEDVEGEALATLVVNKLRGGLKIAAVKAPGFGDRRKAMLEDIAILTGGTVISEDLGIKLESVTLDMLGKSKKVSISKENTTIVDGAGQKSDIEGRVAQIKAQIEETTSDYDREKLQERLAKLAGGVAVIRVGGSTEVEVKEKKDRIDDALNATRAAVQEGIVPGGGVALLRSSTKITVKGVNDDQEAGINIVRKALQSLVRQIAENAGDEASIVVGKILDKNEDNYGYNAQTGEYGDLIALGIVDPVKVVRTALQNAASVASLLITTEAMIAELPKKESAMPQMPGGGMGGMDF.

Residues Thr30–Pro33, Lys51, Asp87–Thr91, Gly415, and Asp495 contribute to the ATP site.

The protein belongs to the chaperonin (HSP60) family. As to quaternary structure, forms a cylinder of 14 subunits composed of two heptameric rings stacked back-to-back. Interacts with the co-chaperonin GroES.

The protein localises to the cytoplasm. It carries out the reaction ATP + H2O + a folded polypeptide = ADP + phosphate + an unfolded polypeptide.. In terms of biological role, together with its co-chaperonin GroES, plays an essential role in assisting protein folding. The GroEL-GroES system forms a nano-cage that allows encapsulation of the non-native substrate proteins and provides a physical environment optimized to promote and accelerate protein folding. This Agrobacterium fabrum (strain C58 / ATCC 33970) (Agrobacterium tumefaciens (strain C58)) protein is Chaperonin GroEL.